A 189-amino-acid polypeptide reads, in one-letter code: Ion-translocating oxidoreductase complex subunit B (189 aa).

The tract at residues 1–26 (MSAIVIAIVVLTILALVFGVLLGFAA) is hydrophobic. The 59-residue stretch at 32–90 (EGNPLTDQIEALLPQTQCGQCGYPGCRPYAEAIANGDKVNKCPPGGAATMEKLADLMGV) folds into the 4Fe-4S domain. 12 residues coordinate [4Fe-4S] cluster: cysteine 49, cysteine 52, cysteine 57, cysteine 73, cysteine 114, cysteine 117, cysteine 120, cysteine 124, cysteine 144, cysteine 147, cysteine 150, and cysteine 154. 2 4Fe-4S ferredoxin-type domains span residues 105–134 (KVAYIREDECIGCTKCIQACPVDAILGSGK) and 135–164 (LMHTVITDYCTGCDLCVAPCPVDCIDMLPV).

It belongs to the 4Fe4S bacterial-type ferredoxin family. RnfB subfamily. The complex is composed of six subunits: RnfA, RnfB, RnfC, RnfD, RnfE and RnfG. It depends on [4Fe-4S] cluster as a cofactor.

The protein resides in the cell inner membrane. In terms of biological role, part of a membrane-bound complex that couples electron transfer with translocation of ions across the membrane. The sequence is that of Ion-translocating oxidoreductase complex subunit B from Shewanella pealeana (strain ATCC 700345 / ANG-SQ1).